Consider the following 725-residue polypeptide: Ribonuclease Y (725 aa).

The helical transmembrane segment at 4 to 24 (VLVILLSLVLLVLVALILAVA) threads the bilayer. Disordered regions lie at residues 62 to 140 (DGPA…ASDT), 165 to 195 (VAATEDTSLEAPLRESALRESAPGESASVRR), and 300 to 321 (EQRVEERTAGLDEHASRLAGRE). Low complexity-rich tracts occupy residues 84–100 (DAPGAAYGESAAAPDAG) and 114–137 (AAAPEPGAAIGGAPTPAAGSPADA). The 67-residue stretch at 415–481 (VVTVLHLPGD…RITLAALVSD (67 aa)) folds into the KH domain. In terms of domain architecture, HD spans 541-634 (VLAHLIESAH…TQAADQISGG (94 aa)).

Belongs to the RNase Y family.

It localises to the cell membrane. In terms of biological role, endoribonuclease that initiates mRNA decay. The polypeptide is Ribonuclease Y (Frankia alni (strain DSM 45986 / CECT 9034 / ACN14a)).